We begin with the raw amino-acid sequence, 334 residues long: Kihadalactone A synthase LFS (334 aa).

Positions 181 to 286 (KTASYSNMFH…RYSTGLFLCP (106 aa)) constitute a Fe2OG dioxygenase domain. H208, D210, and H269 together coordinate Fe cation. R277 contacts 2-oxoglutarate.

It belongs to the iron/ascorbate-dependent oxidoreductase family. Fe(2+) is required as a cofactor. In terms of tissue distribution, expressed in maturing fruits and in juice vesicles.

It carries out the reaction (1R,2R,3S,8R,10R,11R,15S,16S)-3-(acetyloxy)-15-(1-hydroxy-4-oxobutan-2-yl)-2,7,7,11,16-pentamethyl-5-oxo-6-oxatetracyclo[9.7.0.0(2,8).0(12,16)]octadec-12-en-10-yl acetate + 2-oxoglutarate + O2 = kihadalactone A + succinate + CO2 + 2 H2O. It functions in the pathway secondary metabolite biosynthesis; terpenoid biosynthesis. In terms of biological role, 2-oxoglutarate-Fe(II) type oxidoreductase involved in the biosynthesis of limonoids triterpene natural products such as limonin, a compound with insecticidal activity responsible for the bitter taste in citrus. Catalyzes the formation of kihadalactone A. The protein is Kihadalactone A synthase LFS of Citrus sinensis (Sweet orange).